A 112-amino-acid polypeptide reads, in one-letter code: Putative acyl carrier protein, mitochondrial (112 aa).

The transit peptide at 1-28 (MLSRFSSQLRFISAVRPVIPKFQPLRFY) directs the protein to the mitochondrion. The Carrier domain occupies 33–109 (PDAEKRILKV…DAISYITKNP (77 aa)). Ser69 carries the post-translational modification O-(pantetheine 4'-phosphoryl)serine.

This sequence belongs to the acyl carrier protein (ACP) family. Post-translationally, 4'-phosphopantetheine is transferred from CoA to a specific serine of apo-ACP by acpS. This modification is essential for activity because fatty acids are bound in thioester linkage to the sulfhydryl of the prosthetic group.

It localises to the mitochondrion. Its pathway is lipid metabolism; fatty acid biosynthesis. Carrier of the growing fatty acid chain in fatty acid biosynthesis. May be involved in the synthesis of very-long-chain fatty acids. The chain is Putative acyl carrier protein, mitochondrial from Schizosaccharomyces pombe (strain 972 / ATCC 24843) (Fission yeast).